The following is a 185-amino-acid chain: GTP cyclohydrolase 1 (185 aa).

The Zn(2+) site is built by C75, H78, and C146.

This sequence belongs to the GTP cyclohydrolase I family. As to quaternary structure, toroid-shaped homodecamer, composed of two pentamers of five dimers.

It carries out the reaction GTP + H2O = 7,8-dihydroneopterin 3'-triphosphate + formate + H(+). Its pathway is cofactor biosynthesis; 7,8-dihydroneopterin triphosphate biosynthesis; 7,8-dihydroneopterin triphosphate from GTP: step 1/1. The protein is GTP cyclohydrolase 1 of Methylococcus capsulatus (strain ATCC 33009 / NCIMB 11132 / Bath).